The primary structure comprises 448 residues: tRNA methyltransferase 10 homolog C (448 aa).

A mitochondrion-targeting transit peptide spans 1-48 (MAFVNTLLRTIRCSAVHTLVQEGRSLSLLKASHQLTQSRKIMLSNHVR). Residues 137-165 (REVMKTNRKEKKKELKESKSKIESLDQLE) are a coiled coil. The disordered stretch occupies residues 144 to 167 (RKEKKKELKESKSKIESLDQLETK). The 193-residue stretch at 190-382 (QRWKCVQAMK…SFVPNRKHDG (193 aa)) folds into the SAM-dependent MTase TRM10-type domain. Residues 429 to 448 (ERTDDTSIRSTRKRWWEEEN) are disordered.

It belongs to the class IV-like SAM-binding methyltransferase superfamily. TRM10 family. Component of mitochondrial ribonuclease P. Interacts with HSD17B10/MRPP2.

It localises to the mitochondrion matrix. The protein resides in the mitochondrion nucleoid. It carries out the reaction adenosine(9) in tRNA + S-adenosyl-L-methionine = N(1)-methyladenosine(9) in tRNA + S-adenosyl-L-homocysteine + H(+). The catalysed reaction is guanosine(9) in tRNA + S-adenosyl-L-methionine = N(1)-methylguanosine(9) in tRNA + S-adenosyl-L-homocysteine + H(+). The enzyme catalyses an adenosine in mRNA + S-adenosyl-L-methionine = an N(1)-methyladenosine in mRNA + S-adenosyl-L-homocysteine + H(+). Functionally, mitochondrial tRNA N(1)-methyltransferase involved in mitochondrial tRNA maturation. Component of mitochondrial ribonuclease P, which cleaves tRNA molecules in their 5'-ends. Together with hsd17b10/mrpp2, forms a subcomplex of the mitochondrial ribonuclease P, named MRPP1-MRPP2 subcomplex, which displays functions that are independent of the ribonuclease P activity. The MRPP1-MRPP2 subcomplex catalyzes the formation of N(1)-methylguanine and N(1)-methyladenine at position 9 (m1G9 and m1A9, respectively) in tRNAs; trmt10c/mrpp1 acting as the catalytic N(1)-methyltransferase subunit. The MRPP1-MRPP2 subcomplex also acts as a tRNA maturation platform: following 5'-end cleavage by the mitochondrial ribonuclease P complex, the MRPP1-MRPP2 subcomplex enhances the efficiency of 3'-processing catalyzed by ELAC2, retains the tRNA product after elac2 processing and presents the nascent tRNA to the mitochondrial CCA tRNA nucleotidyltransferase TRNT1 enzyme. In addition to tRNA N(1)-methyltransferase activity, trmt10c/mrpp1 also acts as a mRNA N(1)-methyltransferase by mediating methylation of adenosine residues at the N(1) position of MT-ND5 mRNA. This is tRNA methyltransferase 10 homolog C from Xenopus tropicalis (Western clawed frog).